Here is a 370-residue protein sequence, read N- to C-terminus: DNA replication and repair protein RecF (370 aa).

Residue 30 to 37 (GENAQGKT) coordinates ATP.

This sequence belongs to the RecF family.

The protein localises to the cytoplasm. Functionally, the RecF protein is involved in DNA metabolism; it is required for DNA replication and normal SOS inducibility. RecF binds preferentially to single-stranded, linear DNA. It also seems to bind ATP. The protein is DNA replication and repair protein RecF of Listeria welshimeri serovar 6b (strain ATCC 35897 / DSM 20650 / CCUG 15529 / CIP 8149 / NCTC 11857 / SLCC 5334 / V8).